The primary structure comprises 235 residues: Large ribosomal subunit protein uL1 (235 aa).

This sequence belongs to the universal ribosomal protein uL1 family. Part of the 50S ribosomal subunit.

Its function is as follows. Binds directly to 23S rRNA. The L1 stalk is quite mobile in the ribosome, and is involved in E site tRNA release. Functionally, protein L1 is also a translational repressor protein, it controls the translation of the L11 operon by binding to its mRNA. This Nitratidesulfovibrio vulgaris (strain DSM 19637 / Miyazaki F) (Desulfovibrio vulgaris) protein is Large ribosomal subunit protein uL1.